The following is a 565-amino-acid chain: uncharacterized protein (565 aa).

5 helical membrane-spanning segments follow: residues 4 to 26 (FVQF…AVWV), 33 to 55 (GYGL…VGAA), 68 to 90 (SLLY…VNAL), 97 to 119 (YAIL…TQFF), and 162 to 184 (ISAM…IILL). RCK C-terminal domains are found at residues 210–295 (PNVD…LGPE) and 296–379 (VPDA…IFGV). The next 5 helical transmembrane spans lie at 389–411 (LLTL…PAFG), 415–432 (GLGN…VSSI), 453–472 (LGLI…DLLT), 482–504 (IFIV…GFHI), and 539–561 (WLGF…YFAM).

It belongs to the AAE transporter (TC 2.A.81) family.

It localises to the cell membrane. This is an uncharacterized protein from Bordetella bronchiseptica (strain ATCC BAA-588 / NCTC 13252 / RB50) (Alcaligenes bronchisepticus).